The primary structure comprises 303 residues: MNYLLGAFKPACNISITFSDGKNRKQVPMKKENGQTALVPLFHSQDTISGKVCIEPYQGKKVEHNGVKVELLGQIEMYFDRGNFYDFTSLVRELDVPGEIYERKTYPFEFPTVEMPYETYNGVNVRLRYVLKVTVTRGYAGSILEYQELVVRNYAPLPDINNSIKMEVGIEDCLHIEFEYNKSKYHLKDVILGKIYFLLVRIKMKNMDLEIRRRESTGAGANTHVETETLAKFELMDGTPVRGESIPVRLFLAPYDLTPTHRNINNKFSVKYYLNLVLVDEEDRRYFKQQEITLYRLKEDASS.

It belongs to the VPS26 family. In terms of assembly, component of the retromer complex which consists of VPS29 (MAG1), VPS26 (VPS26A or VPS26B), VPS35 (VPS35A or VPS35B or VPS35C), VPS5/17 (SNX1 or SNX2A or SNX2B). Component of a retromer subcomplex consisting of VPS29 (MAG1), VPS26 (VPS26A or VPS26B), VPS35 (VPS35A or VPS35B or VPS35C).

Its subcellular location is the cytoplasm. It localises to the endosome membrane. The protein resides in the prevacuolar compartment membrane. The protein localises to the golgi apparatus. It is found in the trans-Golgi network membrane. Its function is as follows. Plays a role in vesicular protein sorting. Component of the membrane-associated retromer complex which is essential in endosome-to-Golgi retrograde transport. The VPS29-VPS26-VPS35 subcomplex may be involved in recycling of specific cargos from endosome to the plasma membrane. This chain is Vacuolar protein sorting-associated protein 26B (VPS26B), found in Arabidopsis thaliana (Mouse-ear cress).